Here is a 1017-residue protein sequence, read N- to C-terminus: DNA polymerase (1017 aa).

This sequence belongs to the DNA polymerase type-B family. Heterodimer with the terminal protein; this heterodimer binds to bp 9 to 18 of the genome. Forms a complex with viral pTP, DBP and hosts NFIA and POU2F1/OCT1 for initiation of replication.

It localises to the host nucleus. The catalysed reaction is DNA(n) + a 2'-deoxyribonucleoside 5'-triphosphate = DNA(n+1) + diphosphate. Its function is as follows. Eukaryotic-type DNA polymerase involved in viral genomic replication. DNA synthesis is protein primed, and acts in a strand displacement replication. Assembles in complex with viral pTP, DBP, host NFIA and host POU2F1/OCT1 on viral origin of replication. The polymerase covalently transfers dCMP onto pTP, thereby initiating complementary strand synthesis. This chain is DNA polymerase, found in Bovine adenovirus 2 (BAdV-2).